The chain runs to 3423 residues: Genome polyprotein (3423 aa).

The segment at 1–25 is disordered; that stretch reads MKNPKKKSGGFRIVNMLKRGVARVS. Over 1–104 the chain is Cytoplasmic; that stretch reads MKNPKKKSGG…INARKEKKRR (104 aa). A hydrophobic; homodimerization of capsid protein C region spans residues 37–72; it reads LLLGHGPIRMVLAILAFLRFTAIKPSLGLINRWGSV. Residues 105–122 constitute a propeptide, ER anchor for capsid protein C, removed in mature form by serine protease NS3; that stretch reads GADTSVGIVGLLLTTAMA. A helical membrane pass occupies residues 105–125; that stretch reads GADTSVGIVGLLLTTAMAAEV. Over 126–249 the chain is Extracellular; that stretch reads TRRGSAYYMY…YTKHLIRVEN (124 aa). A glycan (N-linked (GlcNAc...) asparagine; by host) is linked at N192. The helical transmembrane segment at 250 to 269 threads the bilayer; the sequence is WIFRNPGFALAAAAIAWLLG. Residues 270 to 274 lie on the Cytoplasmic side of the membrane; it reads SSTSQ. A helical membrane pass occupies residues 275-290; it reads KVIYLVMILLIAPAYS. Residues 291–745 lie on the Extracellular side of the membrane; it reads IRCIGVSNRD…HQIFGAAFKS (455 aa). K328 is covalently cross-linked (Glycyl lysine isopeptide (Lys-Gly) (interchain with G-Cter in ubiquitin)). 2 disulfide bridges follow: C350–C406 and C382–C411. Residues 388-401 are fusion peptide; sequence DRGWGNGCGLFGKG. The N-linked (GlcNAc...) asparagine; by host glycan is linked to N444. Intrachain disulfides connect C480/C581 and C598/C629. K571 is covalently cross-linked (Glycyl lysine isopeptide (Lys-Gly) (interchain with G-Cter in ubiquitin)). The chain crosses the membrane as a helical span at residues 746–767; the sequence is LFGGMSWFSQILIGTLLMWLGL. Over 768–773 the chain is Cytoplasmic; that stretch reads NTKNGS. A helical membrane pass occupies residues 774-794; sequence ISLMCLALGGVLIFLSTAVSA. The Lumenal segment spans residues 795-1177; it reads DVGCSVDFSK…EGLKKRMTTK (383 aa). 6 cysteine pairs are disulfide-bonded: C798–C809, C849–C937, C973–C1017, C1074–C1123, C1085–C1106, and C1107–C1110. N-linked (GlcNAc...) asparagine; by host glycosylation is found at N924 and N1001. The chain crosses the membrane as a helical span at residues 1178–1198; sequence IIISTSMAVLVAMILGGFSMS. Residues 1199-1220 lie on the Cytoplasmic side of the membrane; it reads DLAKLAILMGATFAEMNTGGDV. A helical transmembrane segment spans residues 1221 to 1241; that stretch reads AHLALIAAFKVRPALLVSFIF. Topologically, residues 1242–1270 are lumenal; sequence RANWTPRESMLLALASCLLQTAISALEGD. Residues 1271–1291 form a helical membrane-spanning segment; that stretch reads LMVLINGFALAWLAIRAMVVP. Topologically, residues 1292–1295 are cytoplasmic; sequence RTDN. A helical transmembrane segment spans residues 1296–1316; sequence ITLAILAALTPLARGTLLVAW. The Lumenal segment spans residues 1317–1345; the sequence is RAGLATCGGFMLLSLKGKGSVKKNLPFVM. Residues 1346 to 1366 form a helical membrane-spanning segment; the sequence is ALGLTAVRLVDPINVVGLLLL. The Cytoplasmic segment spans residues 1367 to 1373; the sequence is TRSGKRS. A helical transmembrane segment spans residues 1374-1394; the sequence is WPPSEVLTAVGLICALAGGFA. The Lumenal segment spans residues 1395–1397; the sequence is KAD. Residues 1398-1418 form a helical membrane-spanning segment; the sequence is IEMAGPMAAVGLLIVSYVVSG. Over 1419–1472 the chain is Cytoplasmic; the sequence is KSVDMYIERAGDITWEKDAEVTGNSPRLDVALDESGDFSLVEDDGPPMREIILK. Residues 1425–1464 form an interacts with and activates NS3 protease region; sequence IERAGDITWEKDAEVTGNSPRLDVALDESGDFSLVEDDGP. The disordered stretch occupies residues 1429 to 1451; it reads GDITWEKDAEVTGNSPRLDVALD. An intramembrane region (helical) is located at residues 1473–1493; that stretch reads VVLMTICGMNPIAIPFAAGAW. The Lumenal portion of the chain corresponds to 1494–2170; that stretch reads YVYVKTGKRS…KAAAAQLPET (677 aa). In terms of domain architecture, Peptidase S7 spans 1503–1680; it reads SGALWDVPAP…RREEETPVEC (178 aa). Active-site charge relay system; for serine protease NS3 activity residues include H1553, D1577, and S1637. Positions 1683–1839 constitute a Helicase ATP-binding domain; the sequence is PSMLKKKQLT…DSNSPIMDTE (157 aa). Positions 1687–1690 are important for RNA-binding; the sequence is KKKQ. Position 1696-1703 (1696-1703) interacts with ATP; the sequence is LHPGAGKT. The short motif at 1787–1790 is the DEAH box element; the sequence is DEAH. The region spanning 1834-2013 is the Helicase C-terminal domain; that stretch reads PIMDTEVEVP…GLIASLYRPE (180 aa). Position 1891 is an N6-acetyllysine; by host (K1891). A helical membrane pass occupies residues 2171–2191; it reads LETIMLLGLLGTVSLGIFFVL. The Lumenal portion of the chain corresponds to 2192–2195; sequence MRNK. An intramembrane region (helical) is located at residues 2196–2216; sequence GIGKMGFGMVTLGASAWLMWL. Topologically, residues 2217–2218 are cytoplasmic; the sequence is SE. A helical transmembrane segment spans residues 2219–2239; it reads IEPARIACVLIVVFLLLVVLI. Topologically, residues 2240 to 2254 are lumenal; it reads PEPEKQRSPQDNQMA. An intramembrane region (helical) is located at residues 2255 to 2269; the sequence is IIIMVAVGLLGLITA. Residues 2270-2307 lie on the Lumenal side of the membrane; the sequence is NELGWLERTKSDLSHLMGRREEGATIGFSMDIDLRPAS. The helical intramembrane region spans 2308 to 2328; sequence AWAIYAALTTFITPAVQHAVT. Residues 2329–2344 are Lumenal-facing; sequence TSYNNYSLMAMATQAG. Residues 2345–2365 form a helical membrane-spanning segment; it reads VLFGMGKGMPFYAWDFGVPLL. Over 2366–2375 the chain is Cytoplasmic; it reads MIGCYSQLTP. The chain crosses the membrane as a helical span at residues 2376-2396; sequence LTLIVAIILLVAHYMYLIPGL. At 2397–2441 the chain is on the lumenal side; the sequence is QAAAARAAQKRTAAGIMKNPVVDGIVVTDIDTMTIDPQVEKKMGQ. A helical transmembrane segment spans residues 2442–2462; the sequence is VLLIAVAVSSAILSRTAWGWG. Residues 2463 to 3423 lie on the Cytoplasmic side of the membrane; sequence EAGALITAAT…GEEGSTPGVL (961 aa). In terms of domain architecture, mRNA cap 0-1 NS5-type MT spans 2521-2785; the sequence is GGGTGETLGE…DVNLGSGTRA (265 aa). 2533–2539 is a binding site for GTP; that stretch reads KARLNQM. Residue S2576 participates in S-adenosyl-L-methionine binding. A Phosphoserine modification is found at S2576. K2581 serves as the catalytic For 2'-O-MTase activity. Residues 2597–2600 are SUMO-interacting motif (SIM); that stretch reads VIDL. 10 residues coordinate S-adenosyl-L-methionine: G2606, W2607, T2624, K2625, H2630, E2631, D2651, V2652, D2666, and I2667. D2666 acts as the For 2'-O-MTase activity in catalysis. GTP is bound at residue 2669–2675; it reads ESSSSPE. The For 2'-O-MTase activity role is filled by K2702. 2733-2735 provides a ligand contact to GTP; sequence RNS. The active-site For 2'-O-MTase activity is the E2738. Position 2740 (Y2740) interacts with S-adenosyl-L-methionine. The short motif at 2908–2914 is the Nuclear localization signal (NLS) element; it reads KHKRPRV. Positions 2959, 2963, 2968, and 2971 each coordinate Zn(2+). The RdRp catalytic domain maps to 3049-3199; sequence GRMYADDTAG…KPIDDRFAHA (151 aa). Zn(2+)-binding residues include H3234, C3250, and C3369.

The protein in the N-terminal section; belongs to the class I-like SAM-binding methyltransferase superfamily. mRNA cap 0-1 NS5-type methyltransferase family. In terms of assembly, homodimer. Interacts with host SERTAD3; this interaction promotes capsid protein C degradation. Interacts with host CAPRIN1; this interaction is probably linked to the inhibition of stress granules formation by the virus. Interacts with host G3BP1; this interaction is probably linked to the inhibition of stress granules formation by the virus. Forms heterodimers with envelope protein E in the endoplasmic reticulum and Golgi. Interacts with non-structural protein 2A. As to quaternary structure, homodimer; in the endoplasmic reticulum and Golgi. Interacts with host TYRO3, AXL and DC-SIGN proteins. Interacts with non-structural protein 2A. Interacts with host HAVCR1; this interaction likely mediates virus attachment to host cell. Interacts with host NCAM1. Interacts with host HSPA5. Interacts with Aedes aegypti SRPN25, APY and venom allergen-1 salivary proteins; the interactions do not affect Zika virus replication in human endothelial cells and keratinocytes. In terms of assembly, homodimer; Homohexamer when secreted. Interacts with host TBK1. Interacts with host USP8. Interacts with envelope protein E. Interacts with the structural protein prM/E complex, and the NS2B/NS3 protease complex. As to quaternary structure, forms a heterodimer with serine protease NS3. May form homooligomers. Interacts with human SPCS1. Interacts with non-structural protein 2A. In terms of assembly, forms a heterodimer with NS2B. Interacts with NS4B. Interacts with unphosphorylated RNA-directed RNA polymerase NS5; this interaction stimulates RNA-directed RNA polymerase NS5 guanylyltransferase activity. Interacts with non-structural protein 2A. Interacts with host SHFL; this interaction promotes NS3 degradation via a lysosome-dependent pathway. Interacts with host CEP63; this interaction disorganizes the centrosome and inhibits host innate immune response. May interact with host ANKLE2; the interaction may cause defects in brain development, such as microcephaly. May interact with host SRPRA and SEC61G. As to quaternary structure, interacts with serine protease NS3. Interacts with NS1. In terms of assembly, homodimer; dimerization may negatively regulate the GTase activity, a crucial step in the capping process. Interacts with host STAT2; this interaction inhibits the phosphorylation of the latter, and, when all viral proteins are present (polyprotein), targets STAT2 for degradation. Interacts with host TBK1 and IKBKE; these interactions lead to the inhibition of the host RIG-I signaling pathway. Interacts with host PAF1 complex; the interaction may prevent the recruitment of the host PAF1 complex to interferon-responsive genes, and thus reduces the immune response. Interacts with serine protease NS3. Interacts with host KPNA2. Interacts with host ZSWIM8; this interaction allows STAT2 binding to ZSWIM8 and subsequent proteasomal degradation leading to inhibition of interferon signaling. In terms of processing, specific enzymatic cleavages in vivo yield mature proteins. Cleavages in the lumen of endoplasmic reticulum are performed by host signal peptidase, whereas cleavages in the cytoplasmic side are performed by serine protease NS3. Signal cleavage at the 2K-4B site requires a prior NS3 protease-mediated cleavage at the 4A-2K site. Post-translationally, cleaved in post-Golgi vesicles by a host furin, releasing the mature small envelope protein M, and peptide pr. This cleavage is incomplete as up to 30% of viral particles still carry uncleaved prM. N-glycosylation plays a role in virulence in mammalian and mosquito hosts, but may have no effect on neurovirulence. In terms of processing, ubiquitination by host TRIM7 promotes virus attachment and fusion of the virus and the host endosome membrane. Post-translationally, N-glycosylated. The excreted form is glycosylated, which is required for efficient secretion of the protein from infected cells. Ubiquitination by host TRIM22 leads to proteasomal degradation. In terms of processing, acetylated by host KAT5. Acetylation modulates NS3 RNA-binding and unwinding activities and plays an important positive role for viral replication. Post-translationally, phosphorylated on serines residues. This phosphorylation may trigger NS5 nuclear localization. Sumoylated, required for regulating IFN induced interferon stimulated genes/ISGs.

It is found in the virion. The protein localises to the host nucleus. It localises to the host cytoplasm. The protein resides in the host perinuclear region. Its subcellular location is the secreted. It is found in the virion membrane. The protein localises to the host endoplasmic reticulum membrane. The enzyme catalyses a 5'-end (5'-triphosphoguanosine)-ribonucleoside in mRNA + S-adenosyl-L-methionine = a 5'-end (N(7)-methyl 5'-triphosphoguanosine)-ribonucleoside in mRNA + S-adenosyl-L-homocysteine. It catalyses the reaction a 5'-end (N(7)-methyl 5'-triphosphoguanosine)-ribonucleoside in mRNA + S-adenosyl-L-methionine = a 5'-end (N(7)-methyl 5'-triphosphoguanosine)-(2'-O-methyl-ribonucleoside) in mRNA + S-adenosyl-L-homocysteine + H(+). The catalysed reaction is RNA(n) + a ribonucleoside 5'-triphosphate = RNA(n+1) + diphosphate. It carries out the reaction Selective hydrolysis of -Xaa-Xaa-|-Yaa- bonds in which each of the Xaa can be either Arg or Lys and Yaa can be either Ser or Ala.. The enzyme catalyses a ribonucleoside 5'-triphosphate + H2O = a ribonucleoside 5'-diphosphate + phosphate + H(+). It catalyses the reaction ATP + H2O = ADP + phosphate + H(+). In terms of biological role, plays a role in virus budding by binding to the cell membrane and gathering the viral RNA into a nucleocapsid that forms the core of the mature virus particle. During virus entry, may induce genome penetration into the host cytoplasm after hemifusion induced by the surface proteins. Can migrate to the cell nucleus where it modulates host functions. Inhibits the integrated stress response (ISR) in the infected cell. Its function is as follows. Inhibits RNA silencing by interfering with host Dicer. Functionally, prevents premature fusion activity of envelope proteins in trans-Golgi by binding to envelope protein E at pH 6.0. After virion release in extracellular space, gets dissociated from E dimers. Plays a role in host immune defense modulation and protection of envelope protein E during virion synthesis. PrM-E cleavage is inefficient, many virions are only partially matured and immature prM-E proteins could play a role in immune evasion. Contributes to fetal microcephaly in humans. Acts as a chaperone for envelope protein E during intracellular virion assembly by masking and inactivating envelope protein E fusion peptide. prM is the only viral peptide matured by host furin in the trans-Golgi network probably to avoid catastrophic activation of the viral fusion activity in acidic Golgi compartment prior to virion release. In terms of biological role, may play a role in virus budding. Exerts cytotoxic effects by activating a mitochondrial apoptotic pathway through M ectodomain. May display a viroporin activity. Its function is as follows. Binds to host cell surface receptors and mediates fusion between viral and cellular membranes. Efficient virus attachment to cell is, at least in part, mediated by host HAVCR1 in a cell-type specific manner. In addition, host NCAM1 can also be used as entry receptor. Interaction with host HSPA5 plays an important role in the early stages of infection as well. Envelope protein is synthesized in the endoplasmic reticulum and forms a heterodimer with protein prM. The heterodimer plays a role in virion budding in the ER, and the newly formed immature particle is covered with 60 spikes composed of heterodimers between precursor prM and envelope protein E. The virion is transported to the Golgi apparatus where the low pH causes the dissociation of PrM-E heterodimers and formation of E homodimers. PrM-E cleavage is inefficient, many virions are only partially matured and immature prM-E proteins could play a role in immune evasion. Functionally, plays a role in the inhibition of host RLR-induced interferon-beta activation by targeting TANK-binding kinase 1/TBK1. In addition, recruits the host deubiquitinase USP8 to cleave 'Lys-11'-linked polyubiquitin chains from caspase-1/CASP1 thus inhibiting its proteasomal degradation. In turn, stabilized CASP1 promotes cleavage of cGAS, which inhibits its ability to recognize mitochondrial DNA release and initiate type I interferon signaling. Component of the viral RNA replication complex that recruits genomic RNA, the structural protein prM/E complex, and the NS2B/NS3 protease complex to the virion assembly site and orchestrates virus morphogenesis. Antagonizes also the host MDA5-mediated induction of alpha/beta interferon antiviral response. May disrupt adherens junction formation and thereby impair proliferation of radial cells in the host cortex. In terms of biological role, required cofactor for the serine protease function of NS3. Its function is as follows. Displays three enzymatic activities: serine protease, NTPase and RNA helicase. NS3 serine protease, in association with NS2B, performs its autocleavage and cleaves the polyprotein at dibasic sites in the cytoplasm: C-prM, NS2A-NS2B, NS2B-NS3, NS3-NS4A, NS4A-2K and NS4B-NS5. NS3 RNA helicase binds RNA and unwinds dsRNA in the 3' to 5' direction. Inhibits the integrated stress response (ISR) in the infected cell by blocking stress granules assembly. Disrupts host centrosome organization in a CEP63-dependent manner to degrade host TBK1 and inhibits innate immune response. Functionally, regulates the ATPase activity of the NS3 helicase activity. NS4A allows NS3 helicase to conserve energy during unwinding. Cooperatively with NS4B suppresses the Akt-mTOR pathway and leads to cellular dysregulation. By inhibiting host ANKLE2 functions, may cause defects in brain development, such as microcephaly. Also antagonizes the host MDA5-mediated induction of alpha/beta interferon antiviral response. Inhibits the integrated stress response (ISR) in the infected cell by blocking stress granules assembly. Functions as a signal peptide for NS4B and is required for the interferon antagonism activity of the latter. In terms of biological role, induces the formation of ER-derived membrane vesicles where the viral replication takes place. Also plays a role in the inhibition of host RLR-induced interferon-beta production at TANK-binding kinase 1/TBK1 level. Cooperatively with NS4A suppresses the Akt-mTOR pathway and leads to cellular dysregulation. Its function is as follows. Replicates the viral (+) and (-) RNA genome, and performs the capping of genomes in the cytoplasm. Methylates viral RNA cap at guanine N-7 and ribose 2'-O positions. Once sufficient NS5 is expressed, binds to the cap-proximal structure and inhibits further translation of the viral genome. Besides its role in RNA genome replication, also prevents the establishment of a cellular antiviral state by blocking the interferon-alpha/beta (IFN-alpha/beta) signaling pathway. Mechanistically, interferes with host kinases TBK1 and IKKE upstream of interferon regulatory factor 3/IRF3 to inhibit the RIG-I pathway. Also antagonizes type I interferon signaling by targeting STAT2 for degradation by the proteasome thereby preventing activation of JAK-STAT signaling pathway. Mechanistically, acts as a scaffold protein to connect host ZSWIM8/CUL3 ligase complex and STAT2, leading to STAT2 degradation. Within the host nucleus, disrupts host SUMO1 and STAT2 co-localization with PML, resulting in PML degradation. May also reduce immune responses by preventing the recruitment of the host PAF1 complex to interferon-responsive genes. In Zika virus (isolate ZIKV/Human/French Polynesia/10087PF/2013) (ZIKV), this protein is Genome polyprotein.